A 204-amino-acid polypeptide reads, in one-letter code: uncharacterized protein (204 aa).

4 helical membrane passes run alanine 21–phenylalanine 50, phenylalanine 92–phenylalanine 114, leucine 150–isoleucine 172, and leucine 176–leucine 198.

Its subcellular location is the cell membrane. This is an uncharacterized protein from Aquifex aeolicus (strain VF5).